We begin with the raw amino-acid sequence, 125 residues long: Protein ApaG (125 aa).

Residues 1 to 125 form the ApaG domain; it reads MIDSPRVCVQ…FRLAVPTFIH (125 aa).

The sequence is that of Protein ApaG from Enterobacter sp. (strain 638).